A 1134-amino-acid chain; its full sequence is DENN domain-containing protein 2B (1134 aa).

Polar residues predominate over residues 1-13; sequence MTMTANKNSSITH. The tract at residues 1–90 is disordered; sequence MTMTANKNSS…DPSPETSPPI (90 aa). S30 and S32 each carry phosphoserine. Over residues 32–43 the composition is skewed to pro residues; the sequence is SPPPVLYPPRSP. Phosphothreonine is present on T228. S230 is subject to Phosphoserine. 2 disordered regions span residues 233-273 and 289-571; these read SYPE…GIRK and LKEQ…KRHS. Residues 249–259 are compositionally biased toward basic and acidic residues; that stretch reads SLYRLEKRPGR. Low complexity predominate over residues 315 to 348; the sequence is GTLGTLEEPTGTASVSPSSRAGGVAGVAGEAGPP. A Phosphothreonine modification is found at T361. S365 bears the Phosphoserine mark. Over residues 370 to 385 the composition is skewed to pro residues; it reads LLPPKSSPDPAVNPVP. The span at 389 to 399 shows a compositional bias: basic and acidic residues; that stretch reads RTFEYEADKNP. The span at 406-428 shows a compositional bias: pro residues; the sequence is GLPPSPTPAAPPPLPSTPAPPVT. The segment covering 429 to 443 has biased composition (basic residues); the sequence is RRPKKDMRGHRKSQN. Over residues 453 to 478 the composition is skewed to polar residues; that stretch reads SSLQSLYPSSPTENGTESQPKFGSKS. Residue T479 is modified to Phosphothreonine. 2 stretches are compositionally biased toward polar residues: residues 511–521 and 542–555; these read KSQQLSENSLD and SLKSNSQSLRSGNW. Position 542 is a phosphoserine (S542). A compositionally biased stretch (basic residues) spans 559 to 570; it reads KSHRLPRLPKRH. 2 positions are modified to phosphoserine: S571 and S619. The interval 633-658 is disordered; the sequence is LSMSSLETASLRDENSESESDSDDRF. A uDENN domain is found at 695 to 843; sequence EYFVVVSLKK…PFPAPGKTIK (149 aa). The 134-residue stretch at 865 to 998 folds into the cDENN domain; the sequence is RLEHVDFECL…LQAALEQALE (134 aa). The region spanning 1000 to 1093 is the dDENN domain; it reads KSELISQDSD…QDRELRKCRA (94 aa).

In terms of assembly, interacts with ITSN1 and GRB2. Isoform 1 interacts with the SH3 domain of ABL1. Phosphorylated. Phosphorylation decreases ITSN1 binding.

It is found in the cytoplasm. Its subcellular location is the cell cortex. The protein resides in the cell membrane. The protein localises to the recycling endosome. In terms of biological role, may be involved in cytoskeletal organization and tumorogenicity. Seems to be involved in a signaling transduction pathway leading to activation of MAPK1/ERK2. Plays a role in EGFR trafficking from recycling endosomes back to the cell membrane. Guanine nucleotide exchange factor (GEF) which may activate RAB9A and RAB9B. Promotes the exchange of GDP to GTP, converting inactive GDP-bound Rab proteins into their active GTP-bound form. Functionally, may block ERK2 activation stimulated by ABL1. May alter cell morphology and cell growth. In Mus musculus (Mouse), this protein is DENN domain-containing protein 2B (Dennd2b).